A 199-amino-acid polypeptide reads, in one-letter code: V-type proton ATPase subunit E (199 aa).

This sequence belongs to the V-ATPase E subunit family.

Produces ATP from ADP in the presence of a proton gradient across the membrane. The protein is V-type proton ATPase subunit E of Clostridium botulinum (strain Loch Maree / Type A3).